A 130-amino-acid polypeptide reads, in one-letter code: Small ribosomal subunit protein uS8 (130 aa).

The protein belongs to the universal ribosomal protein uS8 family. In terms of assembly, part of the 30S ribosomal subunit. Contacts proteins S5 and S12.

One of the primary rRNA binding proteins, it binds directly to 16S rRNA central domain where it helps coordinate assembly of the platform of the 30S subunit. The sequence is that of Small ribosomal subunit protein uS8 from Yersinia pseudotuberculosis serotype O:1b (strain IP 31758).